Here is a 141-residue protein sequence, read N- to C-terminus: Chorion protein S16 (141 aa).

The N-terminal stretch at 1-22 (MSANNMRLLCLLLACYISAIVA) is a signal peptide.

Belongs to the chorion protein S16 family.

It localises to the secreted. In terms of biological role, chorion membrane (egg shell) protein; plays a role in protecting the egg from the environment. This Drosophila subobscura (Fruit fly) protein is Chorion protein S16 (Cp16).